We begin with the raw amino-acid sequence, 396 residues long: E3 ubiquitin-protein ligase NHLRC1 (396 aa).

An RING-type zinc finger spans residues 23–69 (CKVCFERFGHRQQRRPRNLPCGHVVCLACVAALAHPRTLALECPFCR). NHL repeat units follow at residues 110–154 (ALTC…FDSG), 158–201 (AHQF…FDFF), 202–242 (GQIK…LEAD), 245–298 (EGVL…FNSS), 299–347 (MQLI…LGKP), and 348–391 (EEFP…FKVM).

As to quaternary structure, interacts with AGL. Interacts (via the NHL repeats) with EPM2A/laforin. Forms a complex with EPM2A/laforin and HSP70.

It localises to the endoplasmic reticulum. Its subcellular location is the nucleus. The enzyme catalyses S-ubiquitinyl-[E2 ubiquitin-conjugating enzyme]-L-cysteine + [acceptor protein]-L-lysine = [E2 ubiquitin-conjugating enzyme]-L-cysteine + N(6)-ubiquitinyl-[acceptor protein]-L-lysine.. It functions in the pathway protein modification; protein ubiquitination. In terms of biological role, E3 ubiquitin-protein ligase. Together with the phosphatase EPM2A/laforin, appears to be involved in the clearance of toxic polyglucosan and protein aggregates via multiple pathways. In complex with EPM2A/laforin and HSP70, suppresses the cellular toxicity of misfolded proteins by promoting their degradation through the ubiquitin-proteasome system (UPS). Ubiquitinates the glycogen-targeting protein phosphatase subunits PPP1R3C/PTG and PPP1R3D in a laforin-dependent manner and targets them for proteasome-dependent degradation, thus decreasing glycogen accumulation. Polyubiquitinates EPM2A/laforin and ubiquitinates AGL and targets them for proteasome-dependent degradation. Also promotes proteasome-independent protein degradation through the macroautophagy pathway. The chain is E3 ubiquitin-protein ligase NHLRC1 (Nhlrc1) from Rattus norvegicus (Rat).